Here is a 482-residue protein sequence, read N- to C-terminus: Glycogen synthase (482 aa).

Lys-20 provides a ligand contact to ADP-alpha-D-glucose.

It belongs to the glycosyltransferase 1 family. Bacterial/plant glycogen synthase subfamily.

The enzyme catalyses [(1-&gt;4)-alpha-D-glucosyl](n) + ADP-alpha-D-glucose = [(1-&gt;4)-alpha-D-glucosyl](n+1) + ADP + H(+). The protein operates within glycan biosynthesis; glycogen biosynthesis. In terms of biological role, synthesizes alpha-1,4-glucan chains using ADP-glucose. The sequence is that of Glycogen synthase from Aliivibrio salmonicida (strain LFI1238) (Vibrio salmonicida (strain LFI1238)).